A 365-amino-acid polypeptide reads, in one-letter code: Protein Wnt-6 (365 aa).

Positions 1-24 are cleaved as a signal peptide; it reads MLPPLPSRLGLLLLLLLCPAHVGG. Intrachain disulfides connect C76–C87, C124–C132, C134–C172, C222–C236, C224–C231, C294–C325, C310–C320, C324–C364, C340–C355, C342–C352, and C347–C348. N86 carries N-linked (GlcNAc...) asparagine glycosylation. Residues 140–158 show a composition bias toward pro residues; it reads RAPPRPSGLPGTPGPPGPA. Residues 140-164 are disordered; the sequence is RAPPRPSGLPGTPGPPGPAGSPEGS. S228 carries O-palmitoleoyl serine; by PORCN lipidation. N311 carries N-linked (GlcNAc...) asparagine glycosylation.

The protein belongs to the Wnt family. As to quaternary structure, interacts with PORCN. Post-translationally, palmitoleoylation is required for efficient binding to frizzled receptors. Depalmitoleoylation leads to Wnt signaling pathway inhibition. As to expression, expressed in gastric cancer cell lines and gastric cancer tissues (at protein level). Detected in the apical gland region of the gastric foveolar epithelium (at protein level).

The protein localises to the secreted. Its subcellular location is the extracellular space. The protein resides in the extracellular matrix. Ligand for members of the frizzled family of seven transmembrane receptors. Probable developmental protein. May be a signaling molecule which affects the development of discrete regions of tissues. Is likely to signal over only few cell diameters. Together with CAV1 may promote chemoresistance of gastric cancer cells to DNA-damaging anthracycline drugs through the activation of the canonical Wnt receptor signaling pathway. In Homo sapiens (Human), this protein is Protein Wnt-6 (WNT6).